The following is a 90-amino-acid chain: Small ribosomal subunit protein uS15c (90 aa).

Positions 1-11 (MVKNSFSSVIS) are enriched in polar residues. Residues 1-20 (MVKNSFSSVISQEEKKENGG) form a disordered region.

This sequence belongs to the universal ribosomal protein uS15 family. In terms of assembly, part of the 30S ribosomal subunit.

The protein localises to the plastid. The protein resides in the chloroplast. The protein is Small ribosomal subunit protein uS15c (rps15) of Cucumis sativus (Cucumber).